We begin with the raw amino-acid sequence, 517 residues long: Serine hydroxymethyltransferase 2, mitochondrial (517 aa).

Residues 1 to 29 (MALALRRLSSSVKKPISLLSSNGGSLRFM) constitute a mitochondrion transit peptide. L-serine is bound at residue S82. Residues S82, Y102, E104, Y112, 148 to 150 (SGS), and H177 each bind pemetrexed. Residues E104 and Y112 each coordinate L-serine. Methotrexate is bound at residue E104. Methotrexate is bound at residue 184-186 (TDT). Positions 232 and 260 each coordinate pemetrexed. L-serine is bound by residues H260 and K286. K286 is modified (N6-(pyridoxal phosphate)lysine). G331 lines the pemetrexed pocket. A methotrexate-binding site is contributed by K414. R430 contacts L-serine. R430 contacts pemetrexed.

It belongs to the SHMT family. Homotetramer. The cofactor is pyridoxal 5'-phosphate. Ubiquitous. Mainly expressed in the shoot apical meristem and roots. Also detected in the leaf vasculature, especially in the protoxylem and adjacent cell layers.

It is found in the mitochondrion. It catalyses the reaction (6R)-5,10-methylene-5,6,7,8-tetrahydrofolate + glycine + H2O = (6S)-5,6,7,8-tetrahydrofolate + L-serine. It participates in one-carbon metabolism; tetrahydrofolate interconversion. Inhibited by the antifolate drugs methotrexate and pemetrexed. In terms of biological role, functions outside the photorespiratory pathway in catalyzing the interconversion of serine and glycine with the conversion of tetrahydrofolate (THF) into 5,10-methylene-THF. The polypeptide is Serine hydroxymethyltransferase 2, mitochondrial (Arabidopsis thaliana (Mouse-ear cress)).